We begin with the raw amino-acid sequence, 156 residues long: MLVYQDILTGDELLSDSFPYKEIENGMLWEVEGKNPSGEEGGEDEGVDDQAVKVVDIIDTFRLQEQPSFDKKQFVMFMKRYIKQLSPKLDSENQELFKKHIESATKFLMSKLKDFQFFVGESMEGEEGSLVFAYYREGATDPTFLYLAYGLKEIKC.

The 156-residue stretch at Met-1–Cys-156 folds into the TCTP domain.

The protein belongs to the TCTP family. Expressed in stems, cauline leaves, minor veins of rosette leaves, roots, lateral root primordia, vascular tissues of petioles and inflorescences, base of siliques, papillae and ovules. Not detected in root meristems, anthers or seeds. Expressed in stomata, trichomes and root cortex.

Its subcellular location is the nucleus. It is found in the cytoplasm. Its function is as follows. Regulates proliferation. Induces whole plant regeneration when expressed in heterologous systems. Involved in root growth and lateral root development, with a probable role in cell reprogramming. The long-distance transport of TCTP RNA and/or protein in plants may have an important role in regulation of growth and development. The protein is Translationally controlled tumor protein 2 of Arabidopsis thaliana (Mouse-ear cress).